The chain runs to 590 residues: uncharacterized protein (590 aa).

Disordered regions lie at residues 306–329 (IAEP…GIPY) and 528–590 (QPAP…LMNL). The span at 543-563 (PSLPQPVPEPLAPQEPPPPGT) shows a compositional bias: pro residues.

This is an uncharacterized protein from Ictaluridae (bullhead catfishes).